Here is a 313-residue protein sequence, read N- to C-terminus: ADP-L-glycero-D-manno-heptose-6-epimerase (313 aa).

Residues 10 to 11, 31 to 32, Lys-38, Arg-53, 75 to 79, and Asn-92 each bind NADP(+); these read MI, DN, and EGACS. Catalysis depends on Tyr-139, which acts as the Proton acceptor. Lys-143 is an NADP(+) binding site. Asn-174 provides a ligand contact to substrate. NADP(+) is bound by residues Val-175 and Lys-183. The active-site Proton acceptor is the Lys-183. Substrate is bound by residues Ser-185, His-192, 206–209, Arg-214, and Tyr-277; that span reads FEGS.

Belongs to the NAD(P)-dependent epimerase/dehydratase family. HldD subfamily. As to quaternary structure, homopentamer. The cofactor is NADP(+).

It catalyses the reaction ADP-D-glycero-beta-D-manno-heptose = ADP-L-glycero-beta-D-manno-heptose. It participates in nucleotide-sugar biosynthesis; ADP-L-glycero-beta-D-manno-heptose biosynthesis; ADP-L-glycero-beta-D-manno-heptose from D-glycero-beta-D-manno-heptose 7-phosphate: step 4/4. Its pathway is bacterial outer membrane biogenesis; LPS core biosynthesis. In terms of biological role, catalyzes the interconversion between ADP-D-glycero-beta-D-manno-heptose and ADP-L-glycero-beta-D-manno-heptose via an epimerization at carbon 6 of the heptose. This is ADP-L-glycero-D-manno-heptose-6-epimerase from Vibrio parahaemolyticus serotype O3:K6 (strain RIMD 2210633).